A 122-amino-acid chain; its full sequence is Large ribosomal subunit protein uL14c (122 aa).

This sequence belongs to the universal ribosomal protein uL14 family. In terms of assembly, part of the 50S ribosomal subunit.

It localises to the plastid. The protein localises to the chloroplast. In terms of biological role, binds to 23S rRNA. In Jasminum nudiflorum (Winter jasmine), this protein is Large ribosomal subunit protein uL14c.